Reading from the N-terminus, the 302-residue chain is Cell division protein FtsQ (302 aa).

The interval 1–41 (MPAVVRGGPPKPRRPRAEAPASPSKGKPAPRKAQPAAKLHA) is disordered. At 1–50 (MPAVVRGGPPKPRRPRAEAPASPSKGKPAPRKAQPAAKLHAARGVGLSPT) the chain is on the cytoplasmic side. The segment covering 18–38 (EAPASPSKGKPAPRKAQPAAK) has biased composition (low complexity). Residues 51–71 (VALSVAGAALGLGLVVMLATG) traverse the membrane as a helical segment. Topologically, residues 72 to 302 (HRAERLGASM…LPGQPAADGA (231 aa)) are periplasmic. The 69-residue stretch at 94-162 (FRLKTVHIRG…DTVLIAVEER (69 aa)) folds into the POTRA domain.

Belongs to the FtsQ/DivIB family. FtsQ subfamily.

The protein localises to the cell inner membrane. Functionally, essential cell division protein. The protein is Cell division protein FtsQ of Caulobacter vibrioides (strain ATCC 19089 / CIP 103742 / CB 15) (Caulobacter crescentus).